The sequence spans 343 residues: Protein rax1 (343 aa).

Residues 1–235 are Cytoplasmic-facing; the sequence is MASAPRVSEV…NLNPLTCTGR (235 aa). Positions 109-228 constitute an RGS domain; the sequence is ELSNEQTINS…LNHKFKHNLN (120 aa). A helical transmembrane segment spans residues 236 to 256; it reads FIIGYVSTFAAYWLGFCGIFL. Over 257-263 the chain is Extracellular; sequence DYSRRKR. A helical membrane pass occupies residues 264-284; that stretch reads VWTLLPFAFGFYNLICTWSKH. Residues 285 to 317 lie on the Cytoplasmic side of the membrane; the sequence is DPVLALLGYSEVKPFHYEKVLQPSIRLSLNRRA. Residues 318-338 form a helical membrane-spanning segment; the sequence is IFVLSIIVLIVGANTAIFSCV. Residues 339–343 lie on the Extracellular side of the membrane; sequence PSIRL.

The protein resides in the cell membrane. It localises to the endoplasmic reticulum membrane. Functionally, may be involved in cell polarization and division. In Schizosaccharomyces pombe (strain 972 / ATCC 24843) (Fission yeast), this protein is Protein rax1 (rax1).